A 27-amino-acid chain; its full sequence is Endoglucanase gh5 (27 aa).

Glu6 acts as the Nucleophile in catalysis.

It carries out the reaction Endohydrolysis of (1-&gt;4)-beta-D-glucosidic linkages in cellulose, lichenin and cereal beta-D-glucans.. With respect to regulation, activity is stimulated by zinc ions, potassium ions and DTT. Activity is inhibited by manganese and chloride ions. Its function is as follows. Endoglucanase (EG) that cleaves the internal beta-1,4-glucosidic bonds in cellulose. The protein is Endoglucanase gh5 of Fomes meliae (Fomitopsis meliae).